The primary structure comprises 156 residues: UPF0336 protein SACE_6876 (156 aa).

One can recognise a MaoC-like domain in the interval Ile-8–Thr-128.

It belongs to the UPF0336 family.

The chain is UPF0336 protein SACE_6876 from Saccharopolyspora erythraea (strain ATCC 11635 / DSM 40517 / JCM 4748 / NBRC 13426 / NCIMB 8594 / NRRL 2338).